We begin with the raw amino-acid sequence, 121 residues long: Large ribosomal subunit protein uL22 (121 aa).

Belongs to the universal ribosomal protein uL22 family. Part of the 50S ribosomal subunit.

Its function is as follows. This protein binds specifically to 23S rRNA; its binding is stimulated by other ribosomal proteins, e.g. L4, L17, and L20. It is important during the early stages of 50S assembly. It makes multiple contacts with different domains of the 23S rRNA in the assembled 50S subunit and ribosome. The globular domain of the protein is located near the polypeptide exit tunnel on the outside of the subunit, while an extended beta-hairpin is found that lines the wall of the exit tunnel in the center of the 70S ribosome. The chain is Large ribosomal subunit protein uL22 from Arthrobacter sp. (strain FB24).